The primary structure comprises 562 residues: 3-hydroxy-3-methylglutaryl-coenzyme A reductase 2 (562 aa).

2 consecutive transmembrane segments (helical) span residues Ala32–Leu56 and Ile77–Phe100. A linker region spans residues Arg101 to Glu146. Asn118 carries an N-linked (GlcNAc...) asparagine glycan. Residues Asp147 to Arg562 are catalytic. The active-site Charge relay system is the Glu240. Asn304 carries N-linked (GlcNAc...) asparagine glycosylation. Residues Lys372 and Asp448 each act as charge relay system in the active site. Catalysis depends on His544, which acts as the Proton donor. Asn548 carries an N-linked (GlcNAc...) asparagine glycan. Ser550 carries the post-translational modification Phosphoserine.

Belongs to the HMG-CoA reductase family. As to expression, restricted to young seedlings, roots, and inflorescences. Expressed in root tips, shoot apex, secretory zone of the stigma, microspores, mature pollen grains, gynoecium vascular tissue and fertilized ovules.

The protein resides in the endoplasmic reticulum membrane. It catalyses the reaction (R)-mevalonate + 2 NADP(+) + CoA = (3S)-3-hydroxy-3-methylglutaryl-CoA + 2 NADPH + 2 H(+). It functions in the pathway metabolic intermediate biosynthesis; (R)-mevalonate biosynthesis; (R)-mevalonate from acetyl-CoA: step 3/3. With respect to regulation, regulated at the post-translational level in response to alterations of the sphingolipid and the sterol biosynthetic pathways. Catalyzes the synthesis of mevalonate. The specific precursor of all isoprenoid compounds present in plants. This Arabidopsis thaliana (Mouse-ear cress) protein is 3-hydroxy-3-methylglutaryl-coenzyme A reductase 2 (HMG2).